A 279-amino-acid chain; its full sequence is Putative ABC transporter ATP-binding protein GSU3001 (279 aa).

Positions 1 to 237 (MRFSVDLKAY…PAEMESVKLR (237 aa)) constitute an ABC transporter domain. 36-43 (GSNGSGKT) is a binding site for ATP.

Belongs to the ABC transporter superfamily.

The protein resides in the cell inner membrane. Probably part of an ABC transporter complex. Responsible for energy coupling to the transport system. This Geobacter sulfurreducens (strain ATCC 51573 / DSM 12127 / PCA) protein is Putative ABC transporter ATP-binding protein GSU3001.